We begin with the raw amino-acid sequence, 543 residues long: Zinc finger protein tra-4 (543 aa).

Positions 1–38 are disordered; the sequence is MDDPNQCTIKQEDSITRPRPTEAPTIQNLKQEPAIEEG. Over residues 10-20 the composition is skewed to basic and acidic residues; that stretch reads KQEDSITRPRP. C2H2-type zinc fingers lie at residues 218 to 241, 327 to 350, 381 to 406, 413 to 436, 442 to 464, 470 to 493, and 495 to 518; these read VRCKKCKNRFIEKNIYERHLRDKH, PQCPFCDKRFRNEFSLKKHFAKKH, YVCFECTPIRNLCTDNRLLNHRKKFH, FRCSFCNMKFLTPRKLRKHKKMSH, FQCHFCEEIFISEVAVMTHERMH, FECKVCDFRANRYTAMEEHKRDEH, and YVCAICHERHAEYPEMKHHVYEEH.

It belongs to the krueppel C2H2-type zinc-finger protein family. In terms of assembly, interacts with histone deacetylase hda-1. May interact with nasp-1.

The protein localises to the nucleus. Functionally, probable transcription factor. Promotes normal hermaphrodite (XX) development, in concert with histone deacetylase hda-1 and nasp-1, perhaps as components of a complex. May cooperate with transcription factor tra-1 to repress male-specific genes in hermaphrodites. Synthetic multivulva (synMuv) class B protein, required to repress the induction of vulval development by let-60 Ras signaling. This Caenorhabditis elegans protein is Zinc finger protein tra-4.